The primary structure comprises 103 residues: Phosphoribosyl-ATP pyrophosphatase (103 aa).

A disordered region spans residues 84-103 (LQSREGKLSKTSDRKEINDL).

The protein belongs to the PRA-PH family.

It localises to the cytoplasm. The enzyme catalyses 1-(5-phospho-beta-D-ribosyl)-ATP + H2O = 1-(5-phospho-beta-D-ribosyl)-5'-AMP + diphosphate + H(+). The protein operates within amino-acid biosynthesis; L-histidine biosynthesis; L-histidine from 5-phospho-alpha-D-ribose 1-diphosphate: step 2/9. The sequence is that of Phosphoribosyl-ATP pyrophosphatase (hisE) from Listeria innocua serovar 6a (strain ATCC BAA-680 / CLIP 11262).